Here is a 337-residue protein sequence, read N- to C-terminus: MGEQRPLALAWSPWHDRLHRRLHQHPQLLPQRQPLLLAVSGGQDSMALLVLLQELQRLHHWPLNIWHGDHGWHSGSAVIAADLRSWCQQRDLPIQVDQAPQGSTASEASARHWRYSQLQQRAEELGADVVTGHTASDRAETLLLQLARGTDLAGLGALRPVRPLFNDSPDGAQLRRPLLGFSRADTAAVCRDLQVPIWHDPSNQSPAFARNRIRAEVLPVLEQLHPGCSQRMANLAERTSQLRDTQQELSQLALQPLRTSTGLDRRRLGALQPSTRRQLLVIWLAQQGVTALNAALLEQLTDRLALSAAGGSCDLPGGWRLQWQGDNLSLQPPAAGH.

40–45 (SGGQDS) serves as a coordination point for ATP.

The protein belongs to the tRNA(Ile)-lysidine synthase family.

The protein resides in the cytoplasm. The enzyme catalyses cytidine(34) in tRNA(Ile2) + L-lysine + ATP = lysidine(34) in tRNA(Ile2) + AMP + diphosphate + H(+). Functionally, ligates lysine onto the cytidine present at position 34 of the AUA codon-specific tRNA(Ile) that contains the anticodon CAU, in an ATP-dependent manner. Cytidine is converted to lysidine, thus changing the amino acid specificity of the tRNA from methionine to isoleucine. This is tRNA(Ile)-lysidine synthase from Parasynechococcus marenigrum (strain WH8102).